A 495-amino-acid chain; its full sequence is Leucine aminopeptidase 2 (495 aa).

An N-terminal signal peptide occupies residues 1–21 (MKSQLLSLAVAVTTISQGVVG). Positions 124 to 218 (PPASKIMAEL…EDGKNLATLV (95 aa)) constitute a PA domain. N-linked (GlcNAc...) asparagine glycosylation is found at Asn142 and Asn235. Zn(2+) contacts are provided by His259 and Asp271. Asn272 carries an N-linked (GlcNAc...) asparagine glycan. The Proton acceptor role is filled by Glu303. Glu304 and Asp332 together coordinate Zn(2+). A glycan (N-linked (GlcNAc...) asparagine) is linked at Asn352. His430 is a binding site for Zn(2+).

This sequence belongs to the peptidase M28 family. M28A subfamily. Monomer. Zn(2+) serves as cofactor.

It is found in the secreted. With respect to regulation, activity is inhibited by EDTA, o-phenanthroline, bestatin and amastatin. Extracellular aminopeptidase that releases a wide variety of amino acids from natural peptides and contributes to pathogenicity. The protein is Leucine aminopeptidase 2 (LAP2) of Trichophyton rubrum (Athlete's foot fungus).